We begin with the raw amino-acid sequence, 195 residues long: Porimin (195 aa).

The signal sequence occupies residues 1–23; the sequence is MALCARAALLLGVLQVLALLGAA. At 24-152 the chain is on the extracellular side; sequence QDPTDAQGSA…PTKGKGSKFD (129 aa). 6 N-linked (GlcNAc...) asparagine glycosylation sites follow: asparagine 36, asparagine 45, asparagine 51, asparagine 59, asparagine 109, and asparagine 115. The tract at residues 99-127 is disordered; sequence VTPTASKSTPNASASPNSTHTSASMTTPA. A compositionally biased stretch (polar residues) spans 101 to 126; it reads PTASKSTPNASASPNSTHTSASMTTP. The helical transmembrane segment at 153–173 threads the bilayer; the sequence is AGSFVGGIVLTLGVLSILYIG. The Cytoplasmic portion of the chain corresponds to 174 to 195; it reads CKMYYSRRGIRYRSIDEHDAII. A Phosphoserine modification is found at serine 187.

This sequence belongs to the CD164 family.

The protein resides in the membrane. Its function is as follows. Implicated in oncotic cell death, characterized by cell swelling, organelle swelling, vacuolization and increased membrane permeability. This is Porimin (Tmem123) from Mus musculus (Mouse).